A 793-amino-acid polypeptide reads, in one-letter code: Putative dipeptidyl aminopeptidase C2E11.08 (793 aa).

The Cytoplasmic portion of the chain corresponds to 1-24; that stretch reads MNDFSFEDKGLISRSGFGSRHVRR. A helical; Signal-anchor for type II membrane protein membrane pass occupies residues 25 to 45; the sequence is VVKALALIFSLLILYLTISNV. The Lumenal portion of the chain corresponds to 46-793; that stretch reads SDSPPKRDSL…STGVRQHRWD (748 aa). N-linked (GlcNAc...) asparagine glycans are attached at residues Asn-101, Asn-136, Asn-246, Asn-299, Asn-303, Asn-324, Asn-336, Asn-377, Asn-384, Asn-407, and Asn-535. Residues Ser-647, Asp-722, and His-755 each act as charge relay system in the active site. N-linked (GlcNAc...) asparagine glycosylation is present at Asn-761.

The protein belongs to the peptidase S9B family.

Its subcellular location is the vacuole membrane. The sequence is that of Putative dipeptidyl aminopeptidase C2E11.08 from Schizosaccharomyces pombe (strain 972 / ATCC 24843) (Fission yeast).